Here is a 147-residue protein sequence, read N- to C-terminus: Large ribosomal subunit protein uL16 (147 aa).

It belongs to the universal ribosomal protein uL16 family. Part of the 50S ribosomal subunit.

Its function is as follows. Binds 23S rRNA and is also seen to make contacts with the A and possibly P site tRNAs. In Finegoldia magna (strain ATCC 29328 / DSM 20472 / WAL 2508) (Peptostreptococcus magnus), this protein is Large ribosomal subunit protein uL16.